Reading from the N-terminus, the 363-residue chain is Phosphoserine aminotransferase (363 aa).

Arg42 contributes to the L-glutamate binding site. Pyridoxal 5'-phosphate contacts are provided by residues 76–77, Trp102, Thr156, Asp175, and Gln198; that span reads GR. Residue Lys199 is modified to N6-(pyridoxal phosphate)lysine. Pyridoxal 5'-phosphate is bound at residue 240 to 241; sequence NT.

Belongs to the class-V pyridoxal-phosphate-dependent aminotransferase family. SerC subfamily. Homodimer. The cofactor is pyridoxal 5'-phosphate.

The protein resides in the cytoplasm. It catalyses the reaction O-phospho-L-serine + 2-oxoglutarate = 3-phosphooxypyruvate + L-glutamate. The enzyme catalyses 4-(phosphooxy)-L-threonine + 2-oxoglutarate = (R)-3-hydroxy-2-oxo-4-phosphooxybutanoate + L-glutamate. Its pathway is amino-acid biosynthesis; L-serine biosynthesis; L-serine from 3-phospho-D-glycerate: step 2/3. It functions in the pathway cofactor biosynthesis; pyridoxine 5'-phosphate biosynthesis; pyridoxine 5'-phosphate from D-erythrose 4-phosphate: step 3/5. In terms of biological role, catalyzes the reversible conversion of 3-phosphohydroxypyruvate to phosphoserine and of 3-hydroxy-2-oxo-4-phosphonooxybutanoate to phosphohydroxythreonine. In Shewanella baltica (strain OS223), this protein is Phosphoserine aminotransferase.